The primary structure comprises 137 residues: Ribonuclease kappa (137 aa).

Helical transmembrane passes span alanine 52 to phenylalanine 72 and valine 104 to cysteine 124.

The protein belongs to the RNase K family. Interacts with the proton translocation complex V0 of the V-ATPase. Interacts with ATP6AP1. As to expression, widely expressed.

Its subcellular location is the endomembrane system. The protein localises to the cytoplasmic vesicle. It is found in the clathrin-coated vesicle membrane. Functionally, endoribonuclease which preferentially cleaves ApU and ApG phosphodiester bonds. Hydrolyzes UpU bonds at a lower rate. Regulates the activity of vacuolar (H+)-ATPase (V-ATPase) which is responsible for acidifying and maintaining the pH of intracellular compartments. Required at an early stage of receptor-mediated endocytosis. In terms of biological role, (Microbial infection) Required at an early stage of both clathrin-mediated and clathrin-independent endocytic uptake of a diverse set of viruses, including dengue, West Nile, Sindbis, Rift Valley Fever, influenza, and human rhinoviruses. The polypeptide is Ribonuclease kappa (RNASEK) (Homo sapiens (Human)).